We begin with the raw amino-acid sequence, 78 residues long: Large ribosomal subunit protein bL28 (78 aa).

The interval 1-20 (MSRVCQVTGKGPVTGNNISH) is disordered.

The protein belongs to the bacterial ribosomal protein bL28 family.

This is Large ribosomal subunit protein bL28 from Azotobacter vinelandii (strain DJ / ATCC BAA-1303).